The sequence spans 215 residues: MPGEATETVPATEQELPQPQAETGSGTESDSDESVPELEEQDSTQATTQQAQLAAAAEIDEEPVSKAKQSRSEKKARKAMSKLGLRQVTGVTRVTIRKSKNILFVITKPDVYKSPASDTYIVFGEAKIEDLSQQAQLAAAEKFKVQGEAVSNIQENTQTPTVQEESEEEEVDETGVEVKDIELVMSQANVSRAKAVRALKNNSNDIVNAIMELTM.

The disordered stretch occupies residues 1–81 (MPGEATETVP…SEKKARKAMS (81 aa)). Over residues 9-28 (VPATEQELPQPQAETGSGTE) the composition is skewed to polar residues. Over residues 29 to 42 (SDSDESVPELEEQD) the composition is skewed to acidic residues. Residue S43 is modified to Phosphoserine; by ILK1. Over residues 44–57 (TQATTQQAQLAAAA) the composition is skewed to low complexity. Residues 69–80 (QSRSEKKARKAM) are required for DNA-binding. Residues 70–135 (SRSEKKARKA…AKIEDLSQQA (66 aa)) enclose the NAC-A/B domain. The tract at residues 93 to 108 (RVTIRKSKNILFVITK) is RNA/DNA-binding. A Phosphoserine modification is found at S132. Position 142 is an N6-acetyllysine; alternate (K142). K142 is covalently cross-linked (Glycyl lysine isopeptide (Lys-Gly) (interchain with G-Cter in SUMO2); alternate). Phosphothreonine; by GSK3-beta is present on T159. T161 carries the phosphothreonine modification. S166, S186, S191, and S203 each carry phosphoserine. Residues 176–213 (VEVKDIELVMSQANVSRAKAVRALKNNSNDIVNAIMEL) form the UBA domain.

The protein belongs to the NAC-alpha family. As to quaternary structure, interacts with TBP and JUN. Part of the nascent polypeptide-associated complex (NAC), which is a heterodimer of NACA and BTF3 (via NAC-A/B domains). NAC associates with ribosomes through the BTF3/NACB subunit and contacts the ribosomal protein L23, which is positioned near the exiting site. Both subunits can contact nascent polypeptide chains. NACA may also form homodimers, and only this form binds DNA. In terms of processing, phosphorylation of Thr-159 by GSK3B may promote proteasome mediated degradation. Phosphorylation of Ser-43 by ILK during cell adhesion may promote nuclear localization. As to expression, ubiquitously expressed.

It is found in the cytoplasm. The protein resides in the nucleus. Prevents inappropriate targeting of non-secretory polypeptides to the endoplasmic reticulum (ER). Binds to nascent polypeptide chains as they emerge from the ribosome and blocks their interaction with the signal recognition particle (SRP), which normally targets nascent secretory peptides to the ER. Also reduces the inherent affinity of ribosomes for protein translocation sites in the ER membrane (M sites). May act as a specific coactivator for JUN, binding to DNA and stabilizing the interaction of JUN homodimers with target gene promoters. In Homo sapiens (Human), this protein is Nascent polypeptide-associated complex subunit alpha (NACA).